The following is a 497-amino-acid chain: 4,4'-diaponeurosporene oxygenase (497 aa).

Residue Val7 to Ile19 participates in FAD binding.

The protein belongs to the carotenoid/retinoid oxidoreductase family. CrtP subfamily. It depends on FAD as a cofactor.

The enzyme catalyses all-trans-4,4'-diaponeurosporene + 2 AH2 + 2 O2 = 4,4'-diaponeurosporenal + 2 A + 3 H2O. Its pathway is carotenoid biosynthesis; staphyloxanthin biosynthesis; staphyloxanthin from farnesyl diphosphate: step 3/5. In terms of biological role, involved in the biosynthesis of the yellow-orange carotenoid staphyloxanthin, which plays a role in the virulence via its protective function against oxidative stress. Catalyzes the oxidation of the terminal methyl side group of 4,4'-diaponeurosporene to form 4,4'-diaponeurosporen-4-al. This chain is 4,4'-diaponeurosporene oxygenase, found in Staphylococcus aureus (strain bovine RF122 / ET3-1).